The primary structure comprises 492 residues: Aspartyl/glutamyl-tRNA(Asn/Gln) amidotransferase subunit B (492 aa).

This sequence belongs to the GatB/GatE family. GatB subfamily. In terms of assembly, heterotrimer of A, B and C subunits.

It carries out the reaction L-glutamyl-tRNA(Gln) + L-glutamine + ATP + H2O = L-glutaminyl-tRNA(Gln) + L-glutamate + ADP + phosphate + H(+). The catalysed reaction is L-aspartyl-tRNA(Asn) + L-glutamine + ATP + H2O = L-asparaginyl-tRNA(Asn) + L-glutamate + ADP + phosphate + 2 H(+). Functionally, allows the formation of correctly charged Asn-tRNA(Asn) or Gln-tRNA(Gln) through the transamidation of misacylated Asp-tRNA(Asn) or Glu-tRNA(Gln) in organisms which lack either or both of asparaginyl-tRNA or glutaminyl-tRNA synthetases. The reaction takes place in the presence of glutamine and ATP through an activated phospho-Asp-tRNA(Asn) or phospho-Glu-tRNA(Gln). The polypeptide is Aspartyl/glutamyl-tRNA(Asn/Gln) amidotransferase subunit B (Pelagibacter ubique (strain HTCC1062)).